The sequence spans 124 residues: Small ribosomal subunit protein uS12 (124 aa).

Positions 1 to 22 (MATINQLVRKPRKRKVAKSDVP) are disordered. At Asp-89 the chain carries 3-methylthioaspartic acid. Positions 101-124 (TLDTQGVQNRKQGRSKYGAKRPKS) are disordered. Over residues 111-124 (KQGRSKYGAKRPKS) the composition is skewed to basic residues.

Belongs to the universal ribosomal protein uS12 family. As to quaternary structure, part of the 30S ribosomal subunit. Contacts proteins S8 and S17. May interact with IF1 in the 30S initiation complex.

With S4 and S5 plays an important role in translational accuracy. Its function is as follows. Interacts with and stabilizes bases of the 16S rRNA that are involved in tRNA selection in the A site and with the mRNA backbone. Located at the interface of the 30S and 50S subunits, it traverses the body of the 30S subunit contacting proteins on the other side and probably holding the rRNA structure together. The combined cluster of proteins S8, S12 and S17 appears to hold together the shoulder and platform of the 30S subunit. This Marinobacter nauticus (strain ATCC 700491 / DSM 11845 / VT8) (Marinobacter aquaeolei) protein is Small ribosomal subunit protein uS12.